The sequence spans 57 residues: MQYAFSFSFWADIEYPSFACSSVETLTYIPTFFGVFSSIKFMIIYPPFLETYVLFSG.

This is an uncharacterized protein from Bacillus phage phi105 (Bacteriophage phi-105).